The chain runs to 165 residues: Plastocyanin, chloroplastic (165 aa).

A chloroplast-targeting transit peptide spans 1 to 66 (MATVTSSAAV…AGILAGNAMA (66 aa)). One can recognise a Plastocyanin-like domain in the interval 67–165 (AEVLLGSSDG…AGMVGKVTVN (99 aa)). Cu cation is bound by residues histidine 103, cysteine 150, histidine 153, and methionine 158.

This sequence belongs to the plastocyanin family. The cofactor is Cu(2+).

Its subcellular location is the plastid. The protein localises to the chloroplast thylakoid membrane. Its function is as follows. Participates in electron transfer between P700 and the cytochrome b6-f complex in photosystem I. The sequence is that of Plastocyanin, chloroplastic (PETE) from Silene latifolia subsp. alba (White campion).